A 235-amino-acid chain; its full sequence is Purine nucleoside phosphorylase DeoD-type (235 aa).

Residue histidine 4 coordinates a purine D-ribonucleoside. Phosphate contacts are provided by residues glycine 20, arginine 24, arginine 43, and 87–90; that span reads RVGT. A purine D-ribonucleoside-binding positions include 179–181 and 203–204; these read EME and SD. Aspartate 204 (proton donor) is an active-site residue.

It belongs to the PNP/UDP phosphorylase family. In terms of assembly, homohexamer; trimer of homodimers.

It catalyses the reaction a purine D-ribonucleoside + phosphate = a purine nucleobase + alpha-D-ribose 1-phosphate. It carries out the reaction a purine 2'-deoxy-D-ribonucleoside + phosphate = a purine nucleobase + 2-deoxy-alpha-D-ribose 1-phosphate. Functionally, catalyzes the reversible phosphorolytic breakdown of the N-glycosidic bond in the beta-(deoxy)ribonucleoside molecules, with the formation of the corresponding free purine bases and pentose-1-phosphate. The chain is Purine nucleoside phosphorylase DeoD-type from Exiguobacterium sibiricum (strain DSM 17290 / CCUG 55495 / CIP 109462 / JCM 13490 / 255-15).